We begin with the raw amino-acid sequence, 1260 residues long: Phosphatidylinositol 3,4,5-trisphosphate 5-phosphatase 2 (1260 aa).

One can recognise an SH2 domain in the interval 25–121 (WYHRDLSRAA…GLVCALLLPV (97 aa)). A compositionally biased stretch (basic and acidic residues) spans 126–136 (ELDPPDERDAS). The segment at 126–178 (ELDPPDERDASDGEDEKPPLPPRSGTSVSAPLGPSSPPAAPEPPTPAVESAPN) is disordered. A Phosphoserine modification is found at S136. Pro residues predominate over residues 159-171 (PSSPPAAPEPPTP). A phosphoserine mark is found at S243 and S355. The residue at position 888 (Y888) is a Phosphotyrosine. A Phosphoserine modification is found at S892. Positions 899 to 1120 (GAKSKAPSVS…FLGEAAGGDD (222 aa)) are disordered. A compositionally biased stretch (pro residues) spans 940–952 (PPPTGRPPAPPRA). The SH3-binding signature appears at 946–951 (PPAPPR). Residues 953–967 (APREEPLTPRLKPEG) show a composition bias toward basic and acidic residues. T960 is modified (phosphothreonine). The NPXY motif signature appears at 985–988 (NPAY). Y988 is modified (phosphotyrosine). Pro residues-rich tracts occupy residues 998-1013 (LLPP…PVPP), 1050-1061 (LPPPDFPPPPLP), and 1090-1108 (LPPP…PLPP). A Phosphoserine modification is found at S1133. Position 1164 is a phosphotyrosine (Y1164). The tract at residues 1181 to 1200 (EDLAEEAPCPQAGRTGGLGE) is disordered. An SAM domain is found at 1198 to 1260 (LGEAGMGAWL…LLLDTLQLSK (63 aa)). The residue at position 1259 (S1259) is a Phosphoserine.

Belongs to the inositol 1,4,5-trisphosphate 5-phosphatase family. In terms of assembly, interacts with tyrosine phosphorylated form of SHC1. Interacts with EGFR. Upon stimulation by the EGF signaling pathway, it forms a complex with SHC1 and EGFR. Interacts with cytoskeletal protein SORBS3/vinexin, promoting its localization to the periphery of cells. Forms a complex with filamin (FLNA or FLNB), actin, GPIb (GP1BA or GP1BB) that regulates cortical and submembraneous actin. Interacts with c-Met/MET, when c-Met/MET is phosphorylated on 'Tyr-1356'. Interacts with p130Cas/BCAR1. Interacts with CENTD3/ARAP3 via its SAM domain. Interacts with c-Cbl/CBL and CAP/SORBS1. Interacts with activated EPHA2 receptor. Interacts with receptor FCGR2A. Interacts with receptor FCGR2B. Interacts with tyrosine kinase ABL1. Interacts with tyrosine kinase TEC. Interacts with CSF1R. Interacts (via N-terminus) with SH3YL1 (via SH3 domain). Interacts with FCRL6 (tyrosine phosphorylated form). Interacts (via SH2 domain) with tyrosine phosphorylated KLRC1 (via ITIM). Interacts with NEDD9/HEF1. Post-translationally, tyrosine phosphorylated by the members of the SRC family after exposure to a diverse array of extracellular stimuli such as insulin, growth factors such as EGF or PDGF, chemokines, integrin ligands and hypertonic and oxidative stress. May be phosphorylated upon IgG receptor FCGR2B-binding. Phosphorylated at Tyr-988 following cell attachment and spreading. Phosphorylated at Tyr-1164 following EGF signaling pathway stimulation. Expressed abundantly in skeletal muscle tissue.

Its subcellular location is the cytoplasm. It localises to the cytosol. The protein resides in the cytoskeleton. The protein localises to the membrane. It is found in the cell projection. Its subcellular location is the filopodium. It localises to the lamellipodium. The protein resides in the basal cell membrane. The protein localises to the nucleus. It is found in the nucleus speckle. Its subcellular location is the spindle pole. The catalysed reaction is a 1,2-diacyl-sn-glycero-3-phospho-(1D-myo-inositol-3,4,5-trisphosphate) + H2O = a 1,2-diacyl-sn-glycero-3-phospho-(1D-myo-inositol-3,4-bisphosphate) + phosphate. The enzyme catalyses 1,2-dioctanoyl-sn-glycero-3-phospho-(1D-myo-inositol-3,4,5-trisphosphate) + H2O = 1,2-dioctanoyl-sn-glycero-3-phospho-(1D-myo-inositol-3,4-bisphosphate) + phosphate. It carries out the reaction 1,2-dihexadecanoyl-sn-glycero-3-phospho-(1D-myo-inositol-3,4,5-trisphosphate) + H2O = 1,2-dihexadecanoyl-sn-glycero-3-phospho-(1D-myo-inositol-3,4-bisphosphate) + phosphate. Its activity is regulated as follows. Activated upon translocation to the sites of synthesis of PtdIns(3,4,5)P3 in the membrane. Enzymatic activity is enhanced in the presence of phosphatidylserine. Functionally, phosphatidylinositol (PtdIns) phosphatase that specifically hydrolyzes the 5-phosphate of phosphatidylinositol-3,4,5-trisphosphate (PtdIns(3,4,5)P3) to produce PtdIns(3,4)P2, thereby negatively regulating the PI3K (phosphoinositide 3-kinase) pathways. Required for correct mitotic spindle orientation and therefore progression of mitosis. Plays a central role in regulation of PI3K-dependent insulin signaling, although the precise molecular mechanisms and signaling pathways remain unclear. While overexpression reduces both insulin-stimulated MAP kinase and Akt activation, its absence does not affect insulin signaling or GLUT4 trafficking. Confers resistance to dietary obesity. May act by regulating AKT2, but not AKT1, phosphorylation at the plasma membrane. Part of a signaling pathway that regulates actin cytoskeleton remodeling. Required for the maintenance and dynamic remodeling of actin structures as well as in endocytosis, having a major impact on ligand-induced EGFR internalization and degradation. Participates in regulation of cortical and submembraneous actin by hydrolyzing PtdIns(3,4,5)P3 thereby regulating membrane ruffling. Regulates cell adhesion and cell spreading. Required for HGF-mediated lamellipodium formation, cell scattering and spreading. Acts as a negative regulator of EPHA2 receptor endocytosis by inhibiting via PI3K-dependent Rac1 activation. Acts as a regulator of neuritogenesis by regulating PtdIns(3,4,5)P3 level and is required to form an initial protrusive pattern, and later, maintain proper neurite outgrowth. Acts as a negative regulator of the FC-gamma-RIIA receptor (FCGR2A). Mediates signaling from the FC-gamma-RIIB receptor (FCGR2B), playing a central role in terminating signal transduction from activating immune/hematopoietic cell receptor systems. Involved in EGF signaling pathway. Upon stimulation by EGF, it is recruited by EGFR and dephosphorylates PtdIns(3,4,5)P3. Plays a negative role in regulating the PI3K-PKB pathway, possibly by inhibiting PKB activity. Down-regulates Fc-gamma-R-mediated phagocytosis in macrophages independently of INPP5D/SHIP1. In macrophages, down-regulates NF-kappa-B-dependent gene transcription by regulating macrophage colony-stimulating factor (M-CSF)-induced signaling. Plays a role in the localization of AURKA and NEDD9/HEF1 to the basolateral membrane at interphase in polarized cysts, thereby mediates cell cycle homeostasis, cell polarization and cilia assembly. Additionally promotion of cilia growth is also facilitated by hydrolysis of (PtdIns(3,4,5)P3) to PtdIns(3,4)P2. Promotes formation of apical membrane-initiation sites during the initial stages of lumen formation via Rho family-induced actin filament organization and CTNNB1 localization to cell-cell contacts. May also hydrolyze PtdIns(1,3,4,5)P4, and could thus affect the levels of the higher inositol polyphosphates like InsP6. Involved in endochondral ossification. This Sus scrofa (Pig) protein is Phosphatidylinositol 3,4,5-trisphosphate 5-phosphatase 2.